The primary structure comprises 244 residues: 1-(5-phosphoribosyl)-5-[(5-phosphoribosylamino)methylideneamino] imidazole-4-carboxamide isomerase (244 aa).

The active-site Proton acceptor is Asp10. The active-site Proton donor is Asp132.

It belongs to the HisA/HisF family.

The protein localises to the cytoplasm. It catalyses the reaction 1-(5-phospho-beta-D-ribosyl)-5-[(5-phospho-beta-D-ribosylamino)methylideneamino]imidazole-4-carboxamide = 5-[(5-phospho-1-deoxy-D-ribulos-1-ylimino)methylamino]-1-(5-phospho-beta-D-ribosyl)imidazole-4-carboxamide. It participates in amino-acid biosynthesis; L-histidine biosynthesis; L-histidine from 5-phospho-alpha-D-ribose 1-diphosphate: step 4/9. This Xanthomonas axonopodis pv. citri (strain 306) protein is 1-(5-phosphoribosyl)-5-[(5-phosphoribosylamino)methylideneamino] imidazole-4-carboxamide isomerase.